The following is a 525-amino-acid chain: Endoglucanase 10 (525 aa).

An N-terminal signal peptide occupies residues 1 to 26; the sequence is MEEKSKSRGWCGWFIAIIVLASVILA. The Nucleophile role is filled by aspartate 109. N-linked (GlcNAc...) asparagine glycosylation occurs at asparagine 259. Histidine 442 is a catalytic residue. N-linked (GlcNAc...) asparagine glycans are attached at residues asparagine 464 and asparagine 484. Active-site residues include aspartate 489 and glutamate 498.

Belongs to the glycosyl hydrolase 9 (cellulase E) family.

It localises to the secreted. It carries out the reaction Endohydrolysis of (1-&gt;4)-beta-D-glucosidic linkages in cellulose, lichenin and cereal beta-D-glucans.. This chain is Endoglucanase 10, found in Arabidopsis thaliana (Mouse-ear cress).